The sequence spans 204 residues: dITP/XTP pyrophosphatase (204 aa).

Substrate is bound at residue 8-13; that stretch reads SNNAHK. Mg(2+) contacts are provided by glutamate 41 and aspartate 76. The active-site Proton acceptor is the aspartate 76. Substrate-binding positions include serine 77, 159-162, lysine 182, and 187-188; these read FGYD and HR.

The protein belongs to the HAM1 NTPase family. In terms of assembly, homodimer. The cofactor is Mg(2+).

The catalysed reaction is XTP + H2O = XMP + diphosphate + H(+). The enzyme catalyses dITP + H2O = dIMP + diphosphate + H(+). It carries out the reaction ITP + H2O = IMP + diphosphate + H(+). Functionally, pyrophosphatase that catalyzes the hydrolysis of nucleoside triphosphates to their monophosphate derivatives, with a high preference for the non-canonical purine nucleotides XTP (xanthosine triphosphate), dITP (deoxyinosine triphosphate) and ITP. Seems to function as a house-cleaning enzyme that removes non-canonical purine nucleotides from the nucleotide pool, thus preventing their incorporation into DNA/RNA and avoiding chromosomal lesions. The chain is dITP/XTP pyrophosphatase from Clostridium perfringens (strain 13 / Type A).